The chain runs to 184 residues: Small ribosomal subunit protein uS7 (184 aa).

The protein belongs to the universal ribosomal protein uS7 family. Part of the 30S ribosomal subunit.

In terms of biological role, one of the primary rRNA binding proteins, it binds directly to 16S rRNA where it nucleates assembly of the head domain of the 30S subunit. Is located at the subunit interface close to the decoding center. In Thermoplasma volcanium (strain ATCC 51530 / DSM 4299 / JCM 9571 / NBRC 15438 / GSS1), this protein is Small ribosomal subunit protein uS7.